The sequence spans 61 residues: Metallothionein-1H (61 aa).

At M1 the chain carries N-acetylmethionine. Positions 1–29 (MDPNCSCEAGGSCACAGSCKCKKCKCTSC) are beta. A divalent metal cation contacts are provided by C5, C7, C13, C15, C19, C21, C24, C26, C29, C33, C34, C36, C37, C41, C44, C48, C50, and C57. An alpha region spans residues 30–61 (KKSCCSCCPLGCAKCAQGCICKGASEKCSCCA). S58 bears the Phosphoserine mark. A divalent metal cation contacts are provided by C59 and C60.

Belongs to the metallothionein superfamily. Type 1 family. In terms of assembly, monomer.

Metallothioneins have a high content of cysteine residues that bind various heavy metals; these proteins are transcriptionally regulated by both heavy metals and glucocorticoids. The protein is Metallothionein-1H (MT1H) of Homo sapiens (Human).